A 242-amino-acid chain; its full sequence is UPF0309 protein BMEA_B0892 (242 aa).

The SIS domain occupies 30–214; it reads AADLIAAAAR…ARLVGEGDAP (185 aa).

The protein belongs to the UPF0309 family.

This is UPF0309 protein BMEA_B0892 from Brucella melitensis biotype 2 (strain ATCC 23457).